We begin with the raw amino-acid sequence, 82 residues long: MFNMENTAKEEKNSQPLLDLEQDMQDHDRAQELKASVQDKVHKLHALLREGSDKESFGQQQSLLAGYVALQKVLGRINRKMI.

It belongs to the chlamydial CPn_0711/CT_665/TC_0036 family.

This is an uncharacterized protein from Chlamydia pneumoniae (Chlamydophila pneumoniae).